We begin with the raw amino-acid sequence, 930 residues long: Isoleucine--tRNA ligase (930 aa).

The 'HIGH' region motif lies at 57-67; that stretch reads PYANGNIHVGH. Glu554 contacts L-isoleucyl-5'-AMP. The 'KMSKS' region signature appears at 595–599; it reads KMSKS. Lys598 is a binding site for ATP. The Zn(2+) site is built by Cys888, Cys891, Cys908, and Cys911.

The protein belongs to the class-I aminoacyl-tRNA synthetase family. IleS type 1 subfamily. In terms of assembly, monomer. It depends on Zn(2+) as a cofactor.

It is found in the cytoplasm. It catalyses the reaction tRNA(Ile) + L-isoleucine + ATP = L-isoleucyl-tRNA(Ile) + AMP + diphosphate. In terms of biological role, catalyzes the attachment of isoleucine to tRNA(Ile). As IleRS can inadvertently accommodate and process structurally similar amino acids such as valine, to avoid such errors it has two additional distinct tRNA(Ile)-dependent editing activities. One activity is designated as 'pretransfer' editing and involves the hydrolysis of activated Val-AMP. The other activity is designated 'posttransfer' editing and involves deacylation of mischarged Val-tRNA(Ile). The protein is Isoleucine--tRNA ligase of Streptococcus mutans serotype c (strain ATCC 700610 / UA159).